We begin with the raw amino-acid sequence, 102 residues long: Putative pterin-4-alpha-carbinolamine dehydratase (102 aa).

This sequence belongs to the pterin-4-alpha-carbinolamine dehydratase family.

The catalysed reaction is (4aS,6R)-4a-hydroxy-L-erythro-5,6,7,8-tetrahydrobiopterin = (6R)-L-erythro-6,7-dihydrobiopterin + H2O. The protein is Putative pterin-4-alpha-carbinolamine dehydratase of Burkholderia ambifaria (strain ATCC BAA-244 / DSM 16087 / CCUG 44356 / LMG 19182 / AMMD) (Burkholderia cepacia (strain AMMD)).